We begin with the raw amino-acid sequence, 166 residues long: Urease accessory protein UreE 2 (166 aa).

A disordered region spans residues 133–156; that stretch reads QPEHGAYGGGHHHSRAGEEDFNYP.

The protein belongs to the UreE family.

The protein localises to the cytoplasm. Involved in urease metallocenter assembly. Binds nickel. Probably functions as a nickel donor during metallocenter assembly. In Pseudomonas syringae pv. tomato (strain ATCC BAA-871 / DC3000), this protein is Urease accessory protein UreE 2.